Consider the following 541-residue polypeptide: Reticulophagy regulator 2 (541 aa).

The next 3 membrane-spanning stretches (helical) occupy residues 75-91 (LHSLVTAATLNGLFWLL), 99-115 (FFLLSISLLTYFLLDLW), and 199-219 (VPGIMISYIVLLSILLWPLVV). A disordered region spans residues 249-282 (LHHKHDKRKRQGKNAPPAGDEPLAETESESEAEL). Residues 250–260 (HHKHDKRKRQG) are compositionally biased toward basic residues. Acidic residues predominate over residues 270–280 (PLAETESESEA). A Phosphothreonine modification is found at Thr274. 4 positions are modified to phosphoserine: Ser276, Ser278, Ser286, and Ser306. At Thr329 the chain carries Phosphothreonine. 3 disordered regions span residues 331 to 389 (VSED…ADKE), 403 to 440 (THFNGAGSPQEGVKCPPGGPVETLSPEAVSGDLMAPSS), and 459 to 481 (PSVLPSLPQDSPQALTAPEEEEA). Phosphoserine occurs at positions 332, 339, and 342. Positions 459-475 (PSVLPSLPQDSPQALTA) are enriched in low complexity. Residues 485–490 (EDFELL) carry the LIR motif motif. Positions 496–541 (EQLNAELGLGPEMPPKPPDVLPPPPLGPDSHSLVQSDQEAHAVVEP) are disordered. Residues 507–522 (EMPPKPPDVLPPPPLG) show a composition bias toward pro residues.

It belongs to the RETREG family. In terms of assembly, interacts with ATG8 family modifier proteins MAP1LC3A, MAP1LC3B, GABARAP, GABARAPL1 and GABARAPL2. Interacts with CANX.

It localises to the endoplasmic reticulum membrane. Endoplasmic reticulum (ER)-anchored autophagy regulator which exists in an inactive state under basal conditions but is activated following cellular stress. When activated, induces ER fragmentation and mediates ER delivery into lysosomes through sequestration into autophagosomes via interaction with ATG8 family proteins. Required for collagen quality control in a LIR motif-independent manner. This Rattus norvegicus (Rat) protein is Reticulophagy regulator 2 (Retreg2).